The primary structure comprises 189 residues: Thymidylate kinase (189 aa).

7–14 (GIDTAGKS) provides a ligand contact to ATP.

This sequence belongs to the thymidylate kinase family.

The catalysed reaction is dTMP + ATP = dTDP + ADP. Its function is as follows. Phosphorylation of dTMP to form dTDP in both de novo and salvage pathways of dTTP synthesis. In Aliarcobacter butzleri (strain RM4018) (Arcobacter butzleri), this protein is Thymidylate kinase.